An 89-amino-acid chain; its full sequence is Tuberculin-active protein (89 aa).

An intrachain disulfide couples Cys-27 to Cys-59. The segment at 61–89 (DGGSESEGKNGSQMRLIADVGPESATVAK) is disordered.

Tuberculin is the soluble, proteinaceous cell substance of the bacterium, to which infected animals become hypersensitive and react characteristically to dermal injections. The protein is Tuberculin-active protein of Mycobacterium tuberculosis.